A 629-amino-acid polypeptide reads, in one-letter code: MQRSISLTAKRLFVHWNLQGIGNPPTVPSFFNLCGSGCWERSFASASGDYREILRNRLSDIIKVDDAVDLFGDMVKSRPFPSIVEFNKLLSAVAKMNKFELVISLGEQMQTLGISHDLYTYSIFINCFCRRSQLSLALAVLAKMMKLGYEPDIVTLSSLLNGYCHSKRISDAVALVDQMVEMGYKPDTFTFTTLIHGLFLHNKASEAVALVDQMVQRGCQPDLVTYGTVVNGLCKRGDIDLALNLLNKMEAARIKANVVIFNTIIDSLCKYRHVEVAVDLFTEMETKGIRPNVVTYNSLINCLCNYGRWSDASRLLSNMLEKKINPNVVTFNALIDAFFKEGKLVEAEKLHEEMIQRSIDPDTITYNLLINGFCMHNRLDEAKQMFKFMVSKDCLPNIQTYNTLINGFCKCKRVEDGVELFREMSQRGLVGNTVTYTTIIQGFFQAGDCDSAQMVFKQMVSNRVPTDIMTYSILLHGLCSYGKLDTALVIFKYLQKSEMELNIFIYNTMIEGMCKAGKVGEAWDLFCSLSIKPDVVTYNTMISGLCSKRLLQEADDLFRKMKEDGTLPNSGTYNTLIRANLRDCDRAASAELIKEMRSSGFVGDASTISLVTNMLHDGRLDKSFLNMLS.

16 PPR repeats span residues 46–81 (ASGD…RPFP), 82–116 (SIVE…GISH), 117–151 (DLYT…GYEP), 152–186 (DIVT…GYKP), 187–221 (DTFT…GCQP), 222–256 (DLVT…RIKA), 257–291 (NVVI…GIRP), 292–326 (NVVT…KINP), 327–361 (NVVT…SIDP), 362–396 (DTIT…DCLP), 397–431 (NIQT…GLVG), 432–466 (NTVT…RVPT), 467–501 (DIMT…EMEL), 502–532 (NIFI…LSIK), 534–568 (DVVT…GTLP), and 569–603 (NSGT…GFVG).

This sequence belongs to the PPR family. P subfamily.

This chain is Pentatricopeptide repeat-containing protein At1g63150, found in Arabidopsis thaliana (Mouse-ear cress).